A 1023-amino-acid chain; its full sequence is Sodium/potassium-transporting ATPase subunit alpha-1 (1023 aa).

The propeptide occupies 1–5; sequence MGKGV. Positions 1 to 11 are enriched in basic and acidic residues; it reads MGKGVGRDKYE. The disordered stretch occupies residues 1-38; sequence MGKGVGRDKYEPAAVSEHGDKKGKKAKKERDMDELKKE. Residues 6–87 are Cytoplasmic-facing; sequence GRDKYEPAAV…NALTPPPTTP (82 aa). Residue Lys9 is modified to N6-acetyllysine. Tyr10 bears the Phosphotyrosine mark. Ser16 carries the post-translational modification Phosphoserine; by PKC. At Lys21 the chain carries N6-acetyllysine. Residues 28–38 show a composition bias toward basic and acidic residues; it reads KERDMDELKKE. Phosphoserine occurs at positions 40 and 47. The tract at residues 82–84 is phosphoinositide-3 kinase binding; it reads PPP. Residues 88–108 traverse the membrane as a helical segment; sequence EWVKFCRQLFGGFSMLLWIGA. Topologically, residues 109 to 131 are extracellular; sequence ILCFLAYGILAATEEDFDNDNLY. A helical transmembrane segment spans residues 132–152; it reads LGVVLAAVVIITGCFSYYQEA. The Cytoplasmic portion of the chain corresponds to 153–288; sequence KSSKIMESFK…GGQTPIAAEI (136 aa). Residues 216–235 form a disordered region; it reads SSLTGESEPQTRSPDFTNEN. Ser228 is subject to Phosphoserine. Tyr260 bears the Phosphotyrosine mark. A helical transmembrane segment spans residues 289–308; it reads EHFIHIITGVAVFLGVSFFI. At 309–320 the chain is on the extracellular side; that stretch reads LSLILEYTWLEA. A helical transmembrane segment spans residues 321–338; the sequence is VIFLIGIIVANVPEGLLA. The Cytoplasmic portion of the chain corresponds to 339–772; it reads TVTVCLTLTA…EEGRLIFDNL (434 aa). The active-site 4-aspartylphosphate intermediate is Asp376. Ser452 and Ser484 each carry phosphoserine. ATP is bound at residue Lys487. The residue at position 542 (Tyr542) is a Phosphotyrosine. A mediates interaction with SCN7A region spans residues 596–717; sequence RAAVPDAVGK…QGAIVAVTGD (122 aa). Lys661 carries the post-translational modification N6-succinyllysine. Phosphoserine is present on residues Ser668 and Ser675. Mg(2+) contacts are provided by Asp717 and Asp721. Residues 773–792 form a helical membrane-spanning segment; it reads KKSIAYTLTSNIPEITPFLI. At 793 to 802 the chain is on the extracellular side; it reads FIIANIPLPL. The helical transmembrane segment at 803–823 threads the bilayer; it reads GTVTILCIDLGTDMVPAISLA. Over 824–843 the chain is Cytoplasmic; that stretch reads YEQAESDIMKRQPRNPKTDK. The chain crosses the membrane as a helical span at residues 844–866; the sequence is LVNERLISMAYGQIGMIQALGGF. Residues 867 to 918 lie on the Extracellular side of the membrane; it reads FTYFVILAENGFLPFHLLGIRVDWDDRWINDVEDSYGQQWTYEQRKIVEFTC. The helical transmembrane segment at 919 to 938 threads the bilayer; the sequence is HTAFFVSIVVVQWADLVICK. Residues 939–951 lie on the Cytoplasmic side of the membrane; the sequence is TRRNSVFQQGMKN. Ser943 carries the post-translational modification Phosphoserine; by PKA. The chain crosses the membrane as a helical span at residues 952 to 970; the sequence is KILIFGLFEETALAAFLSY. Over 971 to 985 the chain is Extracellular; that stretch reads CPGMGVALRMYPLKP. A helical membrane pass occupies residues 986-1006; that stretch reads TWWFCAFPYSLLIFVYDEIRK. Topologically, residues 1007-1023 are cytoplasmic; it reads LIIRRRPGGWVEKETYY.

It belongs to the cation transport ATPase (P-type) (TC 3.A.3) family. Type IIC subfamily. The sodium/potassium-transporting ATPase is composed of a catalytic alpha subunit, an auxiliary non-catalytic beta subunit and an additional regulatory subunit. Interacts with regulatory subunit FXYD1. Interacts with regulatory subunit FXYD3. Interacts with SIK1. Interacts with SLC35G1 and STIM1. Interacts with CLN3; this interaction regulates the sodium/potassium-transporting ATPase complex localization at the plasma membrane. Interacts with SCN7A; activates ATP1A1 P-type sodium:potassium-exchanging transporter activity which indirectly signals to nearby neurons to regulate sodium homeostasis. Post-translationally, phosphorylation on Tyr-10 modulates pumping activity. Phosphorylation of Ser-943 by PKA modulates the response of ATP1A1 to PKC. Dephosphorylation by protein phosphatase 2A (PP2A) following increases in intracellular sodium, leading to increase catalytic activity. In terms of tissue distribution, expressed in endocardial endothelial cells.

It localises to the cell membrane. Its subcellular location is the basolateral cell membrane. The protein resides in the sarcolemma. It is found in the cell projection. The protein localises to the axon. It localises to the melanosome. It catalyses the reaction K(+)(out) + Na(+)(in) + ATP + H2O = K(+)(in) + Na(+)(out) + ADP + phosphate + H(+). This is the catalytic component of the active enzyme, which catalyzes the hydrolysis of ATP coupled with the exchange of sodium and potassium ions across the plasma membrane. This action creates the electrochemical gradient of sodium and potassium ions, providing the energy for active transport of various nutrients. Could also be part of an osmosensory signaling pathway that senses body-fluid sodium levels and controls salt intake behavior as well as voluntary water intake to regulate sodium homeostasis. The polypeptide is Sodium/potassium-transporting ATPase subunit alpha-1 (ATP1A1) (Oryctolagus cuniculus (Rabbit)).